The following is a 1538-amino-acid chain: Ferredoxin-dependent glutamate synthase (1538 aa).

The For GATase activity role is filled by C34. A Glutamine amidotransferase type-2 domain is found at 34–431; it reads CGVGFIADVN…PGQMISVDIF (398 aa). 1109–1166 provides a ligand contact to FMN; sequence LSEVHQLLAENQLRDRVTLRVDGGLRTGSDIVLAAIMGAEEFGFGTVAMIATGCIMAR. Positions 1162, 1168, and 1173 each coordinate [3Fe-4S] cluster.

The protein belongs to the glutamate synthase family. As to quaternary structure, monomer. Requires [3Fe-4S] cluster as cofactor. FAD is required as a cofactor. FMN serves as cofactor.

Its subcellular location is the plastid. The protein localises to the chloroplast stroma. It carries out the reaction 2 oxidized [2Fe-2S]-[ferredoxin] + 2 L-glutamate = L-glutamine + 2 reduced [2Fe-2S]-[ferredoxin] + 2-oxoglutarate + 2 H(+). Its pathway is amino-acid biosynthesis; L-glutamate biosynthesis via GLT pathway; L-glutamate from 2-oxoglutarate and L-glutamine (ferredoxin route): step 1/1. The protein operates within energy metabolism; nitrogen metabolism. The polypeptide is Ferredoxin-dependent glutamate synthase (gltB) (Pyropia yezoensis (Susabi-nori)).